Here is a 591-residue protein sequence, read N- to C-terminus: Probable lysosomal cobalamin transporter (591 aa).

5 consecutive transmembrane segments (helical) span residues 8–28 (LIWV…STFV), 39–59 (AAVT…VLLI), 95–115 (IVYY…IPFT), 144–164 (WTLG…FVPF), and 198–218 (FLIT…MALL). Residues 238–266 (TASQLETNRERQRQLEGRNEGREGGLDSR) are disordered. Residues 244-266 (TNRERQRQLEGRNEGREGGLDSR) show a composition bias toward basic and acidic residues. A run of 4 helical transmembrane segments spans residues 315-335 (LIGG…MLIT), 378-398 (VLFL…IATA), 422-442 (MATV…AMVV), and 509-529 (FFGI…LIVF).

It belongs to the LIMR family. LMBRD1 subfamily.

The protein localises to the lysosome membrane. Probable lysosomal cobalamin transporter. Required to export cobalamin from lysosomes allowing its conversion to cofactors. The chain is Probable lysosomal cobalamin transporter from Pyrenophora tritici-repentis (strain Pt-1C-BFP) (Wheat tan spot fungus).